The chain runs to 107 residues: Heme-degrading monooxygenase (107 aa).

One can recognise an ABM domain in the interval 2–94 (IIVTNTTKIT…YILDNKIAYY (93 aa)). Residue N6 participates in Fe cation binding. H76 contacts heme.

The protein belongs to the antibiotic biosynthesis monooxygenase family. Heme-degrading monooxygenase IsdG subfamily. Homodimer.

It is found in the cytoplasm. The catalysed reaction is heme b + 3 reduced [NADPH--hemoprotein reductase] + 3 O2 = biliverdin IXalpha + CO + Fe(2+) + 3 oxidized [NADPH--hemoprotein reductase] + 3 H2O + H(+). Allows bacterial pathogens to use the host heme as an iron source. Catalyzes the oxidative degradation of the heme macrocyclic porphyrin ring to the biliverdin in the presence of a suitable electron donor such as ascorbate or NADPH--cytochrome P450 reductase, with subsequent release of free iron. In Bacillus mycoides (strain KBAB4) (Bacillus weihenstephanensis), this protein is Heme-degrading monooxygenase.